Reading from the N-terminus, the 603-residue chain is Elongation factor 4 (603 aa).

One can recognise a tr-type G domain in the interval 7-189 (SRIRNFSIIA…AIVQQVPPPA (183 aa)). GTP is bound by residues 19–24 (DHGKST) and 136–139 (NKID).

This sequence belongs to the TRAFAC class translation factor GTPase superfamily. Classic translation factor GTPase family. LepA subfamily.

The protein localises to the cell inner membrane. It carries out the reaction GTP + H2O = GDP + phosphate + H(+). In terms of biological role, required for accurate and efficient protein synthesis under certain stress conditions. May act as a fidelity factor of the translation reaction, by catalyzing a one-codon backward translocation of tRNAs on improperly translocated ribosomes. Back-translocation proceeds from a post-translocation (POST) complex to a pre-translocation (PRE) complex, thus giving elongation factor G a second chance to translocate the tRNAs correctly. Binds to ribosomes in a GTP-dependent manner. This is Elongation factor 4 from Synechocystis sp. (strain ATCC 27184 / PCC 6803 / Kazusa).